Consider the following 328-residue polypeptide: MKLATPRWWYERDRRSMPMTRALLTPLSWAWAGVTARRIARARPLDAGAPVICVGNLTMGGAGKTPVVREIARRLGGHVLSRGYGGSLAGPVRVDPAVHASGEVGDEPLMLARDLPVWVSRDRLAGARAAAAAGARVVVMDDGHQNPSVKKALSLVVVDGETRNGEWPFGDGRVFPAGPMREPLAAGLARADAAVILLPADLAAPDPELVRVLSKVPVLIARLEPEGPPPVGPQVAFAGIGKPWKFERALKAAGCELVEFAPFPDHYAYDAAALALLADRAAQDGAGLLTTEKDWIRLPPAWRERVRPWPVRAVFQDEAALDAVVGGL.

58–65 (TMGGAGKT) is a binding site for ATP.

This sequence belongs to the LpxK family.

The enzyme catalyses a lipid A disaccharide + ATP = a lipid IVA + ADP + H(+). The protein operates within glycolipid biosynthesis; lipid IV(A) biosynthesis; lipid IV(A) from (3R)-3-hydroxytetradecanoyl-[acyl-carrier-protein] and UDP-N-acetyl-alpha-D-glucosamine: step 6/6. Transfers the gamma-phosphate of ATP to the 4'-position of a tetraacyldisaccharide 1-phosphate intermediate (termed DS-1-P) to form tetraacyldisaccharide 1,4'-bis-phosphate (lipid IVA). In Phenylobacterium zucineum (strain HLK1), this protein is Tetraacyldisaccharide 4'-kinase.